Here is a 299-residue protein sequence, read N- to C-terminus: Protein N-terminal and lysine N-methyltransferase EFM7 (299 aa).

S-adenosyl-L-methionine-binding positions include Trp74, 100 to 102 (GAG), Asp122, Trp155, and Ser178.

The protein belongs to the class I-like SAM-binding methyltransferase superfamily. EFM7 family.

The protein resides in the cytoplasm. Its function is as follows. S-adenosyl-L-methionine-dependent protein methyltransferase that trimethylates the N-terminal glycine 'Gly-2' of elongation factor 1-alpha, before also catalyzing the mono- and dimethylation of 'Lys-3'. This is Protein N-terminal and lysine N-methyltransferase EFM7 from Cryptococcus neoformans var. neoformans serotype D (strain B-3501A) (Filobasidiella neoformans).